We begin with the raw amino-acid sequence, 905 residues long: DNA gyrase subunit A (905 aa).

Residues 35–524 (IPDVRDGLKP…GEFDQDIEDL (490 aa)) enclose the Topo IIA-type catalytic domain. Tyrosine 123 (O-(5'-phospho-DNA)-tyrosine intermediate) is an active-site residue. A GyrA-box motif is present at residues 551-557 (QKRGGKG). Residues 882–905 (IAESSDDNEEDSEFEEEVAEEGSE) form a disordered region. A compositionally biased stretch (acidic residues) spans 885–905 (SSDDNEEDSEFEEEVAEEGSE).

Belongs to the type II topoisomerase GyrA/ParC subunit family. In terms of assembly, heterotetramer, composed of two GyrA and two GyrB chains. In the heterotetramer, GyrA contains the active site tyrosine that forms a transient covalent intermediate with DNA, while GyrB binds cofactors and catalyzes ATP hydrolysis.

The protein resides in the cytoplasm. It catalyses the reaction ATP-dependent breakage, passage and rejoining of double-stranded DNA.. In terms of biological role, a type II topoisomerase that negatively supercoils closed circular double-stranded (ds) DNA in an ATP-dependent manner to modulate DNA topology and maintain chromosomes in an underwound state. Negative supercoiling favors strand separation, and DNA replication, transcription, recombination and repair, all of which involve strand separation. Also able to catalyze the interconversion of other topological isomers of dsDNA rings, including catenanes and knotted rings. Type II topoisomerases break and join 2 DNA strands simultaneously in an ATP-dependent manner. In Rickettsia bellii (strain RML369-C), this protein is DNA gyrase subunit A.